The sequence spans 593 residues: UvrABC system protein C (593 aa).

Positions Met17–Ile94 constitute a GIY-YIG domain. Positions Lys199–Leu234 constitute a UVR domain.

It belongs to the UvrC family. Interacts with UvrB in an incision complex.

Its subcellular location is the cytoplasm. In terms of biological role, the UvrABC repair system catalyzes the recognition and processing of DNA lesions. UvrC both incises the 5' and 3' sides of the lesion. The N-terminal half is responsible for the 3' incision and the C-terminal half is responsible for the 5' incision. The chain is UvrABC system protein C from Staphylococcus aureus (strain MSSA476).